We begin with the raw amino-acid sequence, 239 residues long: tRNA (guanine-N(7)-)-methyltransferase (239 aa).

Residues E69, E94, D121, and D144 each contribute to the S-adenosyl-L-methionine site. Residue D144 is part of the active site. K148 contributes to the substrate binding site. The tract at residues 150 to 155 (RHNKRR) is interaction with RNA. Residues D180 and 217 to 220 (TKFE) contribute to the substrate site.

This sequence belongs to the class I-like SAM-binding methyltransferase superfamily. TrmB family. In terms of assembly, monomer.

It catalyses the reaction guanosine(46) in tRNA + S-adenosyl-L-methionine = N(7)-methylguanosine(46) in tRNA + S-adenosyl-L-homocysteine. It functions in the pathway tRNA modification; N(7)-methylguanine-tRNA biosynthesis. Functionally, catalyzes the formation of N(7)-methylguanine at position 46 (m7G46) in tRNA. This Salmonella paratyphi A (strain ATCC 9150 / SARB42) protein is tRNA (guanine-N(7)-)-methyltransferase.